The chain runs to 752 residues: Maltodextrin phosphorylase (752 aa).

K603 carries the post-translational modification N6-(pyridoxal phosphate)lysine.

It belongs to the glycogen phosphorylase family. It depends on pyridoxal 5'-phosphate as a cofactor.

The catalysed reaction is [(1-&gt;4)-alpha-D-glucosyl](n) + phosphate = [(1-&gt;4)-alpha-D-glucosyl](n-1) + alpha-D-glucose 1-phosphate. Its function is as follows. Phosphorylase is an important allosteric enzyme in carbohydrate metabolism. Enzymes from different sources differ in their regulatory mechanisms and in their natural substrates. However, all known phosphorylases share catalytic and structural properties. In Streptococcus pneumoniae serotype 4 (strain ATCC BAA-334 / TIGR4), this protein is Maltodextrin phosphorylase (malP).